An 802-amino-acid chain; its full sequence is Endoplasmin (802 aa).

An N-terminal signal peptide occupies residues 1 to 21 (MRALWVLGLCCVLLTFGSARA). The SRT pseudosubstrate motif motif lies at 42–44 (SRT). Residue asparagine 62 is glycosylated (N-linked (GlcNAc...) asparagine). Serine 64 carries the post-translational modification Phosphoserine. N-linked (GlcNAc...) asparagine glycosylation occurs at asparagine 107. Asparagine 107, aspartate 149, and asparagine 162 together coordinate ATP. N6-(2-hydroxyisobutyryl)lysine is present on lysine 168. At serine 172 the chain carries Phosphoserine. ATP is bound at residue phenylalanine 199. An N-linked (GlcNAc...) asparagine glycan is attached at asparagine 217. Positions 288-323 (TVEEPAEEEEAAKEEKEEADDEAAVEEEEEEKKPKT) are disordered. Residues 289–317 (VEEPAEEEEAAKEEKEEADDEAAVEEEEE) show a composition bias toward acidic residues. Position 403 is a phosphoserine (serine 403). The residue at position 404 (lysine 404) is an N6-succinyllysine. Residue asparagine 445 is glycosylated (N-linked (GlcNAc...) asparagine). Serine 447 is modified (phosphoserine). Lysine 479 bears the N6-acetyllysine mark. Residues asparagine 481 and asparagine 502 are each glycosylated (N-linked (GlcNAc...) asparagine). Lysine 633 is subject to N6-succinyllysine. Residues 750–802 (DPDAKVEEEPEEEPEDTTEDTEQDEEEEMDAGTDEEEQEQEPEKKSTAEKDEL) form a disordered region. The segment covering 757–789 (EEPEEEPEDTTEDTEQDEEEEMDAGTDEEEQEQ) has biased composition (acidic residues). Residue threonine 782 is modified to Phosphothreonine. The segment covering 790–802 (EPEKKSTAEKDEL) has biased composition (basic and acidic residues). The Prevents secretion from ER motif lies at 799–802 (KDEL).

Belongs to the heat shock protein 90 family. Homodimer; disulfide-linked. Component of an EIF2 complex at least composed of CELF1/CUGBP1, CALR, CALR3, EIF2S1, EIF2S2, HSP90B1 and HSPA5. Part of a large chaperone multiprotein complex comprising DNAJB11, HSP90B1, HSPA5, HYOU, PDIA2, PDIA4, PDIA6, PPIB, SDF2L1, UGGT1 and very small amounts of ERP29, but not, or at very low levels, CALR nor CANX. Interacts with AIMP1; regulates its retention in the endoplasmic reticulum. Hyperglycosylated form interacts with OS9; promoting its degradation by the endoplasmic reticulum associated degradation (ERAD). Interacts with CNPY3. This interaction is disrupted in the presence of ATP. Interacts with TLR4 and TLR9, but not with TLR3. Interacts with MZB1 in a calcium-dependent manner. Interacts with METTL23. Interacts with IL1B; the interaction facilitates cargo translocation into the ERGIC. Interacts with EIF2AK3. In terms of processing, phosphorylated by CK2. Post-translationally, N-glycosylated cotranslationally at Asn-217 by STT3A-containing OST-A complex: this glycosylation is constitutive. In response to various stress, 5 additional facultative sites (Asn-62, Asn-107, Asn-445, Asn-481 and Asn-502) can be glycosylated post-translationally by STT3B-containing OST-B complex, leading to a hyperglycosylated form that is degraded by the ER-associated degradation (ERAD) pathway. In normal conditions, the OST-A complex together with CCDC134 prevent glycosylation at facultative sites during protein folding, thereby preventing hyperglycosylation. Mechanistically, nascent HSP90B1 is tethered during translation to a specialized CCDC134-containing translocon that forms a microenvironment for its folding, in which STT3A associates with the SRT pseudosubstrate motif, and prevents access to facultative glycosylation sites until folding is completed, rendering its facultative sites inaccessible to the OST-B complex.

The protein localises to the endoplasmic reticulum lumen. The protein resides in the sarcoplasmic reticulum lumen. Its subcellular location is the melanosome. It catalyses the reaction ATP + H2O = ADP + phosphate + H(+). In terms of biological role, ATP-dependent chaperone involved in the processing of proteins in the endoplasmic reticulum, regulating their transport. Together with MESD, acts as a modulator of the Wnt pathway by promoting the folding of LRP6, a coreceptor of the canonical Wnt pathway. When associated with CNPY3, required for proper folding of Toll-like receptors. Promotes folding and trafficking of TLR4 to the cell surface. May participate in the unfolding of cytosolic leaderless cargos (lacking the secretion signal sequence) such as the interleukin 1/IL-1 to facilitate their translocation into the ERGIC (endoplasmic reticulum-Golgi intermediate compartment) and secretion; the translocation process is mediated by the cargo receptor TMED10. This Oryctolagus cuniculus (Rabbit) protein is Endoplasmin (HSP90B1).